A 625-amino-acid chain; its full sequence is Isocitrate dehydrogenase kinase/phosphatase (625 aa).

Residues 325–331 (APGIKGM) and K346 each bind ATP. D381 is a catalytic residue. The segment at 596 to 625 (RRHSPGRNDHELLTHLPPEPMLTGLSGMTP) is disordered.

The protein belongs to the AceK family.

Its subcellular location is the cytoplasm. The catalysed reaction is L-seryl-[isocitrate dehydrogenase] + ATP = O-phospho-L-seryl-[isocitrate dehydrogenase] + ADP + H(+). Functionally, bifunctional enzyme which can phosphorylate or dephosphorylate isocitrate dehydrogenase (IDH) on a specific serine residue. This is a regulatory mechanism which enables bacteria to bypass the Krebs cycle via the glyoxylate shunt in response to the source of carbon. When bacteria are grown on glucose, IDH is fully active and unphosphorylated, but when grown on acetate or ethanol, the activity of IDH declines drastically concomitant with its phosphorylation. In Polaromonas sp. (strain JS666 / ATCC BAA-500), this protein is Isocitrate dehydrogenase kinase/phosphatase.